Consider the following 137-residue polypeptide: Putative transcriptional regulatory protein MJ0173 (137 aa).

This sequence belongs to the Tfx family.

Putative transcriptional regulator. This is Putative transcriptional regulatory protein MJ0173 from Methanocaldococcus jannaschii (strain ATCC 43067 / DSM 2661 / JAL-1 / JCM 10045 / NBRC 100440) (Methanococcus jannaschii).